Consider the following 327-residue polypeptide: Peroxidase 21 (327 aa).

Positions 1-28 (MANAKPFCLLGFFCLLLQLFSIFHIGNG) are cleaved as a signal peptide. 4 cysteine pairs are disulfide-bonded: Cys-39–Cys-118, Cys-72–Cys-77, Cys-124–Cys-323, and Cys-204–Cys-231. His-70 functions as the Proton acceptor in the catalytic mechanism. 4 residues coordinate Ca(2+): Asp-71, Val-74, Asp-78, and Ser-80. Substrate is bound at residue Pro-167. Asn-170 carries N-linked (GlcNAc...) asparagine glycosylation. His-197 is a heme b binding site. A Ca(2+)-binding site is contributed by Ser-198. Residues Asp-247, Thr-250, and Asp-255 each contribute to the Ca(2+) site.

Belongs to the peroxidase family. Classical plant (class III) peroxidase subfamily. Requires heme b as cofactor. The cofactor is Ca(2+). In terms of tissue distribution, preferentially expressed in roots and leaves, slightly in stems.

It carries out the reaction 2 a phenolic donor + H2O2 = 2 a phenolic radical donor + 2 H2O. Functionally, removal of H(2)O(2), oxidation of toxic reductants, biosynthesis and degradation of lignin, suberization, auxin catabolism, response to environmental stresses such as wounding, pathogen attack and oxidative stress. These functions might be dependent on each isozyme/isoform in each plant tissue. Might function as heat shock-like defense protein. May be implicated in the systemic acquired resistance response. This is Peroxidase 21 (PER21) from Arabidopsis thaliana (Mouse-ear cress).